The primary structure comprises 354 residues: Serum paraoxonase/arylesterase 2 (354 aa).

An intrachain disulfide couples cysteine 42 to cysteine 352. 2 residues coordinate Ca(2+): glutamate 53 and aspartate 54. The active-site Proton acceptor is histidine 114. Ca(2+)-binding residues include isoleucine 116, asparagine 167, aspartate 168, and asparagine 223. The N-linked (GlcNAc...) asparagine glycan is linked to asparagine 254. Positions 268 and 269 each coordinate Ca(2+). N-linked (GlcNAc...) asparagine glycosylation is found at asparagine 269 and asparagine 323.

It belongs to the paraoxonase family. As to quaternary structure, homotrimer. It depends on Ca(2+) as a cofactor. Post-translationally, glycosylated. In terms of processing, the signal sequence is not cleaved.

It localises to the membrane. The catalysed reaction is a phenyl acetate + H2O = a phenol + acetate + H(+). The enzyme catalyses an N-acyl-L-homoserine lactone + H2O = an N-acyl-L-homoserine + H(+). In terms of biological role, capable of hydrolyzing lactones and a number of aromatic carboxylic acid esters. The polypeptide is Serum paraoxonase/arylesterase 2 (PON2) (Bos taurus (Bovine)).